Here is a 77-residue protein sequence, read N- to C-terminus: Neurotoxin LmNaTx21.1 (77 aa).

Positions 1–7 (LILVACL) are cleaved as a signal peptide. Residues 16 to 76 (KDGYPVDWNN…VEIKGYGRCR (61 aa)) enclose the LCN-type CS-alpha/beta domain. Disulfide bonds link C26-C75, C30-C51, C37-C58, and C41-C60.

The protein belongs to the long (4 C-C) scorpion toxin superfamily. Sodium channel inhibitor family. Alpha subfamily. Expressed by the venom gland.

The protein localises to the secreted. Functionally, binds voltage-independently at site-3 of voltage-gated sodium channels (Nav) and inhibits the inactivation of the activated channels, thereby blocking neuronal transmission. This chain is Neurotoxin LmNaTx21.1, found in Lychas mucronatus (Chinese swimming scorpion).